The chain runs to 324 residues: Probable 6-phosphogluconolactonase 4, chloroplastic (324 aa).

A chloroplast-targeting transit peptide spans 1-63 (MSVSAAVAAA…PAMATDGAAA (63 aa)). The interval 19-43 (ARHRSPPASRVAATSRGRPFSSGPH) is disordered.

Belongs to the glucosamine/galactosamine-6-phosphate isomerase family. 6-phosphogluconolactonase subfamily.

It is found in the plastid. Its subcellular location is the chloroplast. The catalysed reaction is 6-phospho-D-glucono-1,5-lactone + H2O = 6-phospho-D-gluconate + H(+). It participates in carbohydrate degradation; pentose phosphate pathway; D-ribulose 5-phosphate from D-glucose 6-phosphate (oxidative stage): step 2/3. Functionally, hydrolysis of 6-phosphogluconolactone to 6-phosphogluconate. The sequence is that of Probable 6-phosphogluconolactonase 4, chloroplastic from Oryza sativa subsp. japonica (Rice).